Consider the following 543-residue polypeptide: CTP synthase (543 aa).

Residues 1-265 are amidoligase domain; it reads MARYIFITGG…DDEVLAAFGI (265 aa). Residue Ser13 coordinates CTP. A UTP-binding site is contributed by Ser13. 14-19 lines the ATP pocket; the sequence is SLGKGL. Residue Tyr54 coordinates L-glutamine. Asp71 contacts ATP. 2 residues coordinate Mg(2+): Asp71 and Glu139. Residues 146 to 148, 186 to 191, and Lys222 each bind CTP; these read DIE and KTKPTQ. UTP is bound by residues 186–191 and Lys222; that span reads KTKPTQ. Position 238–240 (238–240) interacts with ATP; the sequence is RDV. Positions 291-542 constitute a Glutamine amidotransferase type-1 domain; sequence TIAIVGKYTG…IQAAVVQSRL (252 aa). L-glutamine is bound at residue Gly353. Catalysis depends on Cys380, which acts as the Nucleophile; for glutamine hydrolysis. L-glutamine-binding positions include 381-384, Glu404, and Arg470; that span reads FGMQ. Residues His515 and Glu517 contribute to the active site.

The protein belongs to the CTP synthase family. In terms of assembly, homotetramer.

It catalyses the reaction UTP + L-glutamine + ATP + H2O = CTP + L-glutamate + ADP + phosphate + 2 H(+). It carries out the reaction L-glutamine + H2O = L-glutamate + NH4(+). The enzyme catalyses UTP + NH4(+) + ATP = CTP + ADP + phosphate + 2 H(+). It functions in the pathway pyrimidine metabolism; CTP biosynthesis via de novo pathway; CTP from UDP: step 2/2. Its activity is regulated as follows. Allosterically activated by GTP, when glutamine is the substrate; GTP has no effect on the reaction when ammonia is the substrate. The allosteric effector GTP functions by stabilizing the protein conformation that binds the tetrahedral intermediate(s) formed during glutamine hydrolysis. Inhibited by the product CTP, via allosteric rather than competitive inhibition. Catalyzes the ATP-dependent amination of UTP to CTP with either L-glutamine or ammonia as the source of nitrogen. Regulates intracellular CTP levels through interactions with the four ribonucleotide triphosphates. The chain is CTP synthase from Bradyrhizobium sp. (strain BTAi1 / ATCC BAA-1182).